Consider the following 876-residue polypeptide: Leucine--tRNA ligase (876 aa).

A 'HIGH' region motif is present at residues 42-52 (PYPSGKLHMGH). The 'KMSKS' region signature appears at 634–638 (KMSKS). Position 637 (Lys637) interacts with ATP.

Belongs to the class-I aminoacyl-tRNA synthetase family.

It localises to the cytoplasm. It carries out the reaction tRNA(Leu) + L-leucine + ATP = L-leucyl-tRNA(Leu) + AMP + diphosphate. The sequence is that of Leucine--tRNA ligase from Neisseria gonorrhoeae (strain ATCC 700825 / FA 1090).